Consider the following 208-residue polypeptide: NAD(P)H-quinone oxidoreductase subunit I (208 aa).

4Fe-4S ferredoxin-type domains follow at residues 55–84 (GRIH…VDWV) and 95–124 (RNYS…MTEE). [4Fe-4S] cluster-binding residues include Cys64, Cys67, Cys70, Cys74, Cys104, Cys107, Cys110, and Cys114.

Belongs to the complex I 23 kDa subunit family. In terms of assembly, NDH-1 is composed of at least 11 different subunits. Requires [4Fe-4S] cluster as cofactor.

It localises to the cellular thylakoid membrane. It catalyses the reaction a plastoquinone + NADH + (n+1) H(+)(in) = a plastoquinol + NAD(+) + n H(+)(out). The enzyme catalyses a plastoquinone + NADPH + (n+1) H(+)(in) = a plastoquinol + NADP(+) + n H(+)(out). Its function is as follows. NDH-1 shuttles electrons from an unknown electron donor, via FMN and iron-sulfur (Fe-S) centers, to quinones in the respiratory and/or the photosynthetic chain. The immediate electron acceptor for the enzyme in this species is believed to be plastoquinone. Couples the redox reaction to proton translocation, and thus conserves the redox energy in a proton gradient. This is NAD(P)H-quinone oxidoreductase subunit I from Prochlorococcus marinus (strain MIT 9301).